The following is a 658-amino-acid chain: DNA mismatch repair protein MutL (658 aa).

Disordered stretches follow at residues 114 to 137 (RQND…PTAA) and 437 to 456 (RFGN…PLSD). Positions 442 to 456 (PSETPAPQTDTPLSD) are enriched in polar residues.

Belongs to the DNA mismatch repair MutL/HexB family.

Its function is as follows. This protein is involved in the repair of mismatches in DNA. It is required for dam-dependent methyl-directed DNA mismatch repair. May act as a 'molecular matchmaker', a protein that promotes the formation of a stable complex between two or more DNA-binding proteins in an ATP-dependent manner without itself being part of a final effector complex. This Neisseria meningitidis serogroup B (strain ATCC BAA-335 / MC58) protein is DNA mismatch repair protein MutL.